We begin with the raw amino-acid sequence, 312 residues long: tRNA dimethylallyltransferase (312 aa).

Residue 11–18 (GPTAVGKT) participates in ATP binding. 13–18 (TAVGKT) serves as a coordination point for substrate. The interval 159–163 (QRVLR) is interaction with substrate tRNA.

This sequence belongs to the IPP transferase family. Monomer. The cofactor is Mg(2+).

It catalyses the reaction adenosine(37) in tRNA + dimethylallyl diphosphate = N(6)-dimethylallyladenosine(37) in tRNA + diphosphate. In terms of biological role, catalyzes the transfer of a dimethylallyl group onto the adenine at position 37 in tRNAs that read codons beginning with uridine, leading to the formation of N6-(dimethylallyl)adenosine (i(6)A). In Macrococcus caseolyticus (strain JCSC5402) (Macrococcoides caseolyticum), this protein is tRNA dimethylallyltransferase.